Here is a 367-residue protein sequence, read N- to C-terminus: Probable trehalose-phosphate phosphatase 4 (367 aa).

Belongs to the trehalose phosphatase family. It depends on a divalent metal cation as a cofactor.

It carries out the reaction alpha,alpha-trehalose 6-phosphate + H2O = alpha,alpha-trehalose + phosphate. The protein operates within glycan biosynthesis; trehalose biosynthesis. In terms of biological role, removes the phosphate from trehalose 6-phosphate to produce free trehalose. Trehalose accumulation in plant may improve abiotic stress tolerance. The protein is Probable trehalose-phosphate phosphatase 4 (TPP4) of Oryza sativa subsp. japonica (Rice).